The chain runs to 287 residues: Shikimate dehydrogenase (NADP(+)) (287 aa).

Shikimate-binding positions include 21 to 23 and Thr-68; that span reads SKS. Lys-72 functions as the Proton acceptor in the catalytic mechanism. Residues Asn-93 and Asp-109 each coordinate shikimate. NADP(+)-binding positions include 133–137, 157–162, and Met-226; these read GAGGA and NRTQTK. A shikimate-binding site is contributed by Tyr-228. An NADP(+)-binding site is contributed by Gly-250.

This sequence belongs to the shikimate dehydrogenase family. Homodimer.

The enzyme catalyses shikimate + NADP(+) = 3-dehydroshikimate + NADPH + H(+). It participates in metabolic intermediate biosynthesis; chorismate biosynthesis; chorismate from D-erythrose 4-phosphate and phosphoenolpyruvate: step 4/7. Its function is as follows. Involved in the biosynthesis of the chorismate, which leads to the biosynthesis of aromatic amino acids. Catalyzes the reversible NADPH linked reduction of 3-dehydroshikimate (DHSA) to yield shikimate (SA). The chain is Shikimate dehydrogenase (NADP(+)) from Shewanella oneidensis (strain ATCC 700550 / JCM 31522 / CIP 106686 / LMG 19005 / NCIMB 14063 / MR-1).